Reading from the N-terminus, the 474-residue chain is Gamma-aminobutyric acid receptor subunit beta-1 (474 aa).

The signal sequence occupies residues 1–25; that stretch reads MWTVQNRESLGLLSFPVMVAMVCCA. Topologically, residues 26 to 245 are extracellular; the sequence is HSSNEPSNMS…SFRLKRNIGY (220 aa). 2 N-linked (GlcNAc...) asparagine glycosylation sites follow: Asn33 and Asn105. A histamine-binding site is contributed by Tyr122. Cys161 and Cys175 are joined by a disulfide. Asn174 carries N-linked (GlcNAc...) asparagine glycosylation. Histamine contacts are provided by residues 181–182 and Thr227; that span reads SY. The 4-aminobutanoate site is built by Tyr182 and Thr227. Helical transmembrane passes span 246–267, 271–293, and 305–327; these read FILQTYMPSTLITILSWVSFWI, ASAARVALGITTVLTMTTISTHL, and AIDIYLMGCFVFVFLALLEYAFV. Residues 328–451 lie on the Cytoplasmic side of the membrane; that stretch reads NYIFFGKGPQ…DLTDVNSIDK (124 aa). The chain crosses the membrane as a helical span at residues 452 to 473; it reads WSRMFFPITFSLFNVVYWLYYV.

This sequence belongs to the ligand-gated ion channel (TC 1.A.9) family. Gamma-aminobutyric acid receptor (TC 1.A.9.5) subfamily. GABRB1 sub-subfamily. Heteropentamer, formed by a combination of alpha (GABRA1-6), beta (GABRB1-3), gamma (GABRG1-3), delta (GABRD), epsilon (GABRE), rho (GABRR1-3), pi (GABRP) and theta (GABRQ) chains, each subunit exhibiting distinct physiological and pharmacological properties. Binds UBQLN1.

It localises to the postsynaptic cell membrane. It is found in the cell membrane. The enzyme catalyses chloride(in) = chloride(out). Potentiated by histamine. Beta subunit of the heteropentameric ligand-gated chloride channel gated by gamma-aminobutyric acid (GABA), a major inhibitory neurotransmitter in the brain. GABA-gated chloride channels, also named GABA(A) receptors (GABAAR), consist of five subunits arranged around a central pore and contain GABA active binding site(s) located at the alpha and beta subunit interface(s). When activated by GABA, GABAARs selectively allow the flow of chloride anions across the cell membrane down their electrochemical gradient. Chloride influx into the postsynaptic neuron following GABAAR opening decreases the neuron ability to generate a new action potential, thereby reducing nerve transmission. Beta-containing GABAARs can simultaneously bind GABA and histamine where histamine binds at the interface of two neighboring beta subunits, which may be involved in the regulation of sleep and wakefulness. This chain is Gamma-aminobutyric acid receptor subunit beta-1, found in Rattus norvegicus (Rat).